Here is a 356-residue protein sequence, read N- to C-terminus: MKILAAMSGGVDSSVAAARMVDAGHEVVGVHLALSAAPGTLRTGSRGCCSKEDAADARRVADMLGIPFYVWDFADRFKEDVIDDFVEAYAEGRTPNPCVKCNEKIKFAALADRAVALGFDAVATGHYARLQDGRLRRAVDADKDQSYVLGVLTPEQLRRAMFPVGDSPKPDIRAEAEQRGLLVANKPDSHDICFIPSGDTQAFLGARIGVRRGNVVDADGSVLATHAGVHEFTIGQRKGLGLVGPAADGRPRYVTSIDAETATVRVGTVEDLEIWEFGGEPVVWTSGRVPGQPIECQVQVRAHGSVVDAIVEPGAERIHVRLRTALRGVAPGQTVVLYRPDAEGDEVLGSAVITRD.

Residues 6 to 13 (AMSGGVDS) and L32 each bind ATP. C101 serves as the catalytic Nucleophile. C101 and C193 form a disulfide bridge. G125 contributes to the ATP binding site. The interaction with tRNA stretch occupies residues 143-145 (KDQ). The active-site Cysteine persulfide intermediate is C193.

Belongs to the MnmA/TRMU family.

The protein resides in the cytoplasm. The catalysed reaction is S-sulfanyl-L-cysteinyl-[protein] + uridine(34) in tRNA + AH2 + ATP = 2-thiouridine(34) in tRNA + L-cysteinyl-[protein] + A + AMP + diphosphate + H(+). Its function is as follows. Catalyzes the 2-thiolation of uridine at the wobble position (U34) of tRNA, leading to the formation of s(2)U34. The chain is tRNA-specific 2-thiouridylase MnmA from Mycobacteroides abscessus (strain ATCC 19977 / DSM 44196 / CCUG 20993 / CIP 104536 / JCM 13569 / NCTC 13031 / TMC 1543 / L948) (Mycobacterium abscessus).